The chain runs to 1775 residues: Internalin I (1775 aa).

Residues 1–28 (MKKKFSIVIISVLLLGYLAPFDTLLVGA) form the signal peptide. Low complexity predominate over residues 36–50 (DTTVKTAETETATEA). Positions 36–97 (DTTVKTAETE…SNIKTEINTD (62 aa)) are disordered. The span at 58–85 (DNEKAEEPKEAEASKETTEKEEKAKTKE) shows a compositional bias: basic and acidic residues. 27 LRR repeats span residues 152-176 (AISQ…EGLQ), 180-201 (NLTS…KDLV), 202-224 (NLVS…EGLV), 225-247 (NLQE…AALP), 248-269 (VLKE…NPAG), 274-295 (ELET…AKLP), 296-318 (KLKN…KGAT), 319-341 (KLQL…SGLS), 342-364 (ELEM…KDLP), 365-386 (NLVN…NNLP), 387-409 (KLQT…TDMP), 410-431 (QLKT…DNLP), 432-453 (KLEK…NDLP), 454-475 (RLSY…KKLP), 476-497 (LLEW…TNFP), 498-519 (SLNY…TELP), 520-541 (SLKE…HDMP), 542-563 (NLRK…DNLP), 564-585 (KLQN…HDLP), 586-607 (SLET…DNLP), 608-629 (ELTY…GDLP), 630-650 (KLEI…GTMD), 654-675 (KLRN…GNLS), 682-704 (NLTE…STLS), 705-726 (RLIY…SNLT), 727-748 (TLQE…SDLD), and 749-770 (NLNK…ANMV). The LRRCT domain maps to 782–869 (TYTLPTVLSY…SAVKVTANAE (88 aa)). 3 consecutive MucBP domains span residues 1507–1566 (DAAA…EQTV), 1572–1631 (AIEP…PQTI), and 1641–1702 (SKKS…SQTV). Residues 1713 to 1737 (SKDEPKVKGKTNQPPSADTKLKVDN) form a disordered region. The LPXTG sorting signal signature appears at 1740-1744 (LPATG). The residue at position 1743 (threonine 1743) is a Pentaglycyl murein peptidoglycan amidated threonine. Positions 1744–1775 (GDTENMALAVLIGFNMLLVASIFLFRKPKTNQ) are cleaved as a propeptide — removed by sortase.

Belongs to the internalin family.

The protein resides in the secreted. The protein localises to the cell wall. A role in virulence could not be demonstrated. In Listeria monocytogenes serotype 4b (strain F2365), this protein is Internalin I (inlI).